We begin with the raw amino-acid sequence, 532 residues long: Phosphoenolpyruvate carboxylase (532 aa).

Belongs to the PEPCase type 2 family. Homotetramer. The cofactor is Mg(2+).

The enzyme catalyses oxaloacetate + phosphate = phosphoenolpyruvate + hydrogencarbonate. In terms of biological role, catalyzes the irreversible beta-carboxylation of phosphoenolpyruvate (PEP) to form oxaloacetate (OAA), a four-carbon dicarboxylic acid source for the tricarboxylic acid cycle. The protein is Phosphoenolpyruvate carboxylase of Methanopyrus kandleri (strain AV19 / DSM 6324 / JCM 9639 / NBRC 100938).